Reading from the N-terminus, the 234-residue chain is UPF0502 protein BPSS1373 (234 aa).

This sequence belongs to the UPF0502 family.

This Burkholderia pseudomallei (strain K96243) protein is UPF0502 protein BPSS1373.